We begin with the raw amino-acid sequence, 314 residues long: Serine/threonine-protein phosphatase SIT4 (314 aa).

Residues Asp53, His55, Asp85, and Asn117 each contribute to the Mn(2+) site. Residue His118 is the Proton donor of the active site. 2 residues coordinate Mn(2+): His167 and His241.

This sequence belongs to the PPP phosphatase family. PP-6 (PP-V) subfamily. Interacts with MDS3. The cofactor is Mn(2+).

Its subcellular location is the cytoplasm. It carries out the reaction O-phospho-L-seryl-[protein] + H2O = L-seryl-[protein] + phosphate. The enzyme catalyses O-phospho-L-threonyl-[protein] + H2O = L-threonyl-[protein] + phosphate. Functionally, serine/threonine protein phosphatase which is involved in the dephosphorylation of the large subunit of RNA polymerase II. Is required in late G1 for normal G1 cyclin expression, bud initiation and expression of certain genes that are periodically expressed during late G1. Plays a role during hyphal growth through the regulation of cell wall biogenesis, osmosensing and protein translation. Involved in virulence in a mouse systemic infection model. This chain is Serine/threonine-protein phosphatase SIT4 (SIT4), found in Candida albicans (strain SC5314 / ATCC MYA-2876) (Yeast).